The chain runs to 729 residues: Bromo and FHA domain-containing protein DDB_G0267958 (729 aa).

The segment covering 46 to 79 (LPIPNTSNTNPPMNQSSSPTTTTTTPTTTTTPTT) has biased composition (low complexity). The segment at 46–83 (LPIPNTSNTNPPMNQSSSPTTTTTTPTTTTTPTTAEPA) is disordered. One can recognise an FHA domain in the interval 112–167 (LIIGSDTELADIQVVRPGIYPKHVEIIYDKEKKKFYLNPLIDPKDSDNVRLNFVPF). 3 stretches are compositionally biased toward low complexity: residues 208–221 (IPSNTPTCITNTPI), 229–275 (PPSS…ATKT), and 283–306 (PTKTTTTTTVTTSKPTVKPTAVKK). 2 disordered regions span residues 208–361 (IPSN…MSCK) and 403–442 (SRRPTAPVTPTKPTSTKKVTTPKKATVVKPPKESKVPKVP). Acidic residues predominate over residues 310–341 (DDDYGDDYNEEEDDDDEEEEEEEEEEEEEEEV). Residues 315 to 352 (DDYNEEEDDDDEEEEEEEEEEEEEEEVESKQIKVVNSK) are a coiled coil. Residues 406–431 (PTAPVTPTKPTSTKKVTTPKKATVVK) show a composition bias toward low complexity. Residues 498–617 (SNEKKEILKC…IELYKALSNS (120 aa)) enclose the Bromo domain. Positions 659-718 (SKNKEQTVPQEEDEEEEEEEEEEEEEEEEGEEGKEDEEEEEKEEEEGEENEEEEDVEIDD) form a coiled coil. A disordered region spans residues 659–729 (SKNKEQTVPQ…EIDQESDDDQ (71 aa)). The span at 668 to 729 (QEEDEEEEEE…EIDQESDDDQ (62 aa)) shows a compositional bias: acidic residues.

The sequence is that of Bromo and FHA domain-containing protein DDB_G0267958 from Dictyostelium discoideum (Social amoeba).